We begin with the raw amino-acid sequence, 161 residues long: Probable chemoreceptor glutamine deamidase CheD (161 aa).

The protein belongs to the CheD family.

The catalysed reaction is L-glutaminyl-[protein] + H2O = L-glutamyl-[protein] + NH4(+). Probably deamidates glutamine residues to glutamate on methyl-accepting chemotaxis receptors (MCPs), playing an important role in chemotaxis. The polypeptide is Probable chemoreceptor glutamine deamidase CheD (Lachnoclostridium phytofermentans (strain ATCC 700394 / DSM 18823 / ISDg) (Clostridium phytofermentans)).